We begin with the raw amino-acid sequence, 253 residues long: Sulfate transporter CysZ (253 aa).

4 helical membrane-spanning segments follow: residues phenylalanine 31 to phenylalanine 51, leucine 75 to isoleucine 95, isoleucine 151 to tryptophan 171, and isoleucine 222 to valine 242.

It belongs to the CysZ family.

The protein resides in the cell inner membrane. In terms of biological role, high affinity, high specificity proton-dependent sulfate transporter, which mediates sulfate uptake. Provides the sulfur source for the cysteine synthesis pathway. The sequence is that of Sulfate transporter CysZ from Escherichia coli (strain 55989 / EAEC).